A 210-amino-acid chain; its full sequence is Thymidylate kinase (210 aa).

11-18 serves as a coordination point for ATP; sequence GVDGAGKT.

This sequence belongs to the thymidylate kinase family.

The catalysed reaction is dTMP + ATP = dTDP + ADP. Phosphorylation of dTMP to form dTDP in both de novo and salvage pathways of dTTP synthesis. The sequence is that of Thymidylate kinase (tmk) from Mycoplasma pneumoniae (strain ATCC 29342 / M129 / Subtype 1) (Mycoplasmoides pneumoniae).